The chain runs to 513 residues: 2,3-bisphosphoglycerate-independent phosphoglycerate mutase (513 aa).

2 residues coordinate Mn(2+): Asp15 and Ser65. The Phosphoserine intermediate role is filled by Ser65. Substrate is bound by residues His126, 156–157 (RD), Arg188, Arg194, 263–266 (RADR), and Lys337. The Mn(2+) site is built by Asp402, His406, Asp443, His444, and His461.

Belongs to the BPG-independent phosphoglycerate mutase family. Monomer. Requires Mn(2+) as cofactor.

It carries out the reaction (2R)-2-phosphoglycerate = (2R)-3-phosphoglycerate. Its pathway is carbohydrate degradation; glycolysis; pyruvate from D-glyceraldehyde 3-phosphate: step 3/5. Functionally, catalyzes the interconversion of 2-phosphoglycerate and 3-phosphoglycerate. In Moorella thermoacetica (strain ATCC 39073 / JCM 9320), this protein is 2,3-bisphosphoglycerate-independent phosphoglycerate mutase.